A 426-amino-acid chain; its full sequence is Dihydroorotase (426 aa).

Residues H55 and H57 each contribute to the Zn(2+) site. Residues H57 to R59 and N89 each bind substrate. Zn(2+) contacts are provided by D147, H174, H233, and D306. The active site involves D306. Residues H310 and F324–G325 contribute to the substrate site.

It belongs to the metallo-dependent hydrolases superfamily. DHOase family. Class I DHOase subfamily. Requires Zn(2+) as cofactor.

The enzyme catalyses (S)-dihydroorotate + H2O = N-carbamoyl-L-aspartate + H(+). It participates in pyrimidine metabolism; UMP biosynthesis via de novo pathway; (S)-dihydroorotate from bicarbonate: step 3/3. Catalyzes the reversible cyclization of carbamoyl aspartate to dihydroorotate. The sequence is that of Dihydroorotase from Thermus aquaticus.